The following is a 232-amino-acid chain: MAKKGKKLQDAAKLIDRNSLYSAQEAIELAQKTSTVNFDATVEVAFRLGIDTRKNDQQIRGAVVLPNGTGKTQRVLVFAKGEKLKEAEAAGADYVGDAEYIQKIQQGWFDFDVIVATPDMMGEVGKLGRVLGPKGLMPNPKTGTVTFDVTKAIEEIKAGKVEYRADKAGIIHAPIGKVSFSAAKLVENFLAVFDVVQKAKPAAAKGTYMKSVNITTTMGPAVKIDAANVVVK.

Belongs to the universal ribosomal protein uL1 family. As to quaternary structure, part of the 50S ribosomal subunit.

Functionally, binds directly to 23S rRNA. The L1 stalk is quite mobile in the ribosome, and is involved in E site tRNA release. Its function is as follows. Protein L1 is also a translational repressor protein, it controls the translation of the L11 operon by binding to its mRNA. In Lysinibacillus sphaericus (strain C3-41), this protein is Large ribosomal subunit protein uL1.